We begin with the raw amino-acid sequence, 367 residues long: Putative C-&gt;U-editing enzyme APOBEC-4 (367 aa).

One can recognise a CMP/dCMP-type deaminase domain in the interval 61 to 177 (PQTKHLTFYE…AWNREALRSL (117 aa)). A Zn(2+)-binding site is contributed by His93. Glu95 (proton donor) is an active-site residue. Cys127 and Cys134 together coordinate Zn(2+).

Belongs to the cytidine and deoxycytidylate deaminase family. Zn(2+) serves as cofactor. In terms of tissue distribution, predominantly expressed in testis.

Functionally, putative C to U editing enzyme whose physiological substrate is not yet known. This is Putative C-&gt;U-editing enzyme APOBEC-4 (APOBEC4) from Homo sapiens (Human).